The primary structure comprises 223 residues: uncharacterized protein (223 aa).

A disordered region spans residues 40 to 70 (GSKRLKPAKFGTEGKERVEQRTERQRTGSSK). Positions 51–70 (TEGKERVEQRTERQRTGSSK) are enriched in basic and acidic residues.

This is an uncharacterized protein from Homo sapiens (Human).